Here is a 250-residue protein sequence, read N- to C-terminus: Ribosomal RNA small subunit methyltransferase J (250 aa).

Residues 101–102, 117–118, 153–154, and D171 contribute to the S-adenosyl-L-methionine site; these read RD, ER, and SS.

The protein belongs to the methyltransferase superfamily. RsmJ family.

It localises to the cytoplasm. It catalyses the reaction guanosine(1516) in 16S rRNA + S-adenosyl-L-methionine = N(2)-methylguanosine(1516) in 16S rRNA + S-adenosyl-L-homocysteine + H(+). In terms of biological role, specifically methylates the guanosine in position 1516 of 16S rRNA. This is Ribosomal RNA small subunit methyltransferase J from Erwinia tasmaniensis (strain DSM 17950 / CFBP 7177 / CIP 109463 / NCPPB 4357 / Et1/99).